A 569-amino-acid polypeptide reads, in one-letter code: uncharacterized protein (569 aa).

The first 24 residues, 1–24, serve as a signal peptide directing secretion; it reads MKFQRKYWGLLSTLGVSSAVALSA. A lipid anchor (N-palmitoyl cysteine) is attached at C25. The S-diacylglycerol cysteine moiety is linked to residue C25. Disordered stretches follow at residues 111–137 and 242–267; these read SNMK…EWEV and GKNG…KKIE. 2 stretches are compositionally biased toward low complexity: residues 119–130 and 249–260; these read SSSSSSTGNNGS and KKMTTDSSSTQQ.

This sequence to M.pneumoniae MPN_456 and M.genitalium MG321 N-terminal region.

Its subcellular location is the cell membrane. This is an uncharacterized protein from Mycoplasma pneumoniae (strain ATCC 29342 / M129 / Subtype 1) (Mycoplasmoides pneumoniae).